The sequence spans 219 residues: Bacterial microcompartment shell protein EutL (219 aa).

BMC circularly permuted domains are found at residues 1–113 (MPAL…GAAF) and 114–215 (QWAN…ARNP). Residues Asp45, Asp46, Glu83, and Phe113 each coordinate ethanolamine. Residues 45–46 (DD) form a part of the acidic patch lining the small pore region. Residue Glu157 participates in Zn(2+) binding. 183–185 (TNY) contacts ethanolamine.

It belongs to the EutL/PduB family. In terms of assembly, homotrimerizes to form a pseudohexamer. The trimers form a two-dimensional array about 37 Angstroms thick.

Its subcellular location is the bacterial microcompartment. Its pathway is amine and polyamine degradation; ethanolamine degradation. A component of the bacterial microcompartment (BMC) shell dedicated to ethanolamine degradation. Two crystal forms have been seen; a form with a closed central pore that has 3 very small (1.1-2.2 Angstroms) channels per trimer lined by acidic and aromatic residues. A form with a large central pore (8-12 Angstroms) has also been seen; this is probably a functional pore which allows molecules to enter and exit the BMC in a selective, gated manner. Another group only sees the central pore in the presence of Zn(2+); soaking crystals in ZnCl(2) leads to dramatic conformational changes that open a central pore of about 12 Angstroms. Whether Zn(2+) binding is physiologically relevant is unclear, however it suggests a gating mechanism exists. Ethanolamine-binding by the small channels has been hypothesized to stabilize the EutL central pore in a closed (non-transporting) state. An open pore is thought to be large enough to transport ATP and/or cobalamin. The chain is Bacterial microcompartment shell protein EutL (eutL) from Escherichia coli (strain K12).